Reading from the N-terminus, the 303-residue chain is Glutamyl-Q tRNA(Asp) synthetase (303 aa).

L-glutamate contacts are provided by residues 9-13 (RFAPS) and Glu-45. The 'HIGH' region motif lies at 12–22 (PSPTGAMHLGN). Residues Cys-100, Cys-102, Tyr-125, and Cys-129 each coordinate Zn(2+). Residues Tyr-184 and Arg-202 each coordinate L-glutamate. The 'KMSKS' region motif lies at 240–244 (RLAKR). Lys-243 contacts ATP.

This sequence belongs to the class-I aminoacyl-tRNA synthetase family. GluQ subfamily. The cofactor is Zn(2+).

Its function is as follows. Catalyzes the tRNA-independent activation of glutamate in presence of ATP and the subsequent transfer of glutamate onto a tRNA(Asp). Glutamate is transferred on the 2-amino-5-(4,5-dihydroxy-2-cyclopenten-1-yl) moiety of the queuosine in the wobble position of the QUC anticodon. The polypeptide is Glutamyl-Q tRNA(Asp) synthetase (Deinococcus geothermalis (strain DSM 11300 / CIP 105573 / AG-3a)).